The sequence spans 369 residues: Gap junction alpha-5 protein (369 aa).

Residues 2 to 19 (GDWSFLGEFLEEVHKHST) are Cytoplasmic-facing. A helical membrane pass occupies residues 20–40 (VVGKVWLTVLFIFRMLVLGTA). Topologically, residues 41 to 76 (AGPLWGDEQSDFMCDTQQPGCENVCYDKAFPISHVR) are extracellular. The chain crosses the membrane as a helical span at residues 77-97 (FWVLQIIFVSTPSLVYMGHAM). Residues 98 to 169 (HTVRMEEKRK…YSILIRTAME (72 aa)) lie on the Cytoplasmic side of the membrane. A helical transmembrane segment spans residues 170–190 (IAFIVGQYILYGIFLETLYIC). The Extracellular segment spans residues 191-210 (QRAPCPHPVNCYVSRPTEKN). A helical transmembrane segment spans residues 211–231 (VFIIFMLAVAVLSLFLSLAEL). At 232–369 (YHLGWKKAKE…SKARSDDLSV (138 aa)) the chain is on the cytoplasmic side. Residues 347–369 (NEKRRFSKASRASSKARSDDLSV) form a disordered region.

Belongs to the connexin family. Alpha-type (group II) subfamily. In terms of assembly, a connexon is composed of a hexamer of connexins. Mostly in heart, and in the whole embryo, liver, stomach, and pectoral muscle.

The protein resides in the cell membrane. Its subcellular location is the cell junction. It is found in the gap junction. Functionally, one gap junction consists of a cluster of closely packed pairs of transmembrane channels, the connexons, through which materials of low MW diffuse from one cell to a neighboring cell. In Gallus gallus (Chicken), this protein is Gap junction alpha-5 protein (GJA5).